Reading from the N-terminus, the 233-residue chain is Probable fimbrial chaperone protein ElfD (233 aa).

A signal peptide spans 1 to 26 (MKTCITKGIVTVSLTAILLSCSSAWA).

This sequence belongs to the periplasmic pilus chaperone family.

Its subcellular location is the periplasm. Its function is as follows. Part of the elfADCG-ycbUVF fimbrial operon, which promotes adhesion of bacteria to different abiotic surfaces. Could be required for the biogenesis of the ElfA fimbriae. This is Probable fimbrial chaperone protein ElfD (elfD) from Escherichia coli (strain K12).